The sequence spans 113 residues: Thioredoxin H-type (113 aa).

Residues 2–112 enclose the Thioredoxin domain; sequence GGSVIVIDSK…LKALVAKHAA (111 aa). Active-site nucleophile residues include Cys37 and Cys40. Cys37 and Cys40 are disulfide-bonded.

Belongs to the thioredoxin family. Plant H-type subfamily.

The protein resides in the cytoplasm. Participates in various redox reactions through the reversible oxidation of the active center dithiol to a disulfide. The H form is known to activate a number of cytosolic enzymes. The polypeptide is Thioredoxin H-type (TRXH) (Chlamydomonas reinhardtii (Chlamydomonas smithii)).